Here is a 313-residue protein sequence, read N- to C-terminus: Protein MFI (313 aa).

As to quaternary structure, can homodimerize. Interacts with MFF; the interaction inhibits MFF interaction with DNM1L. In terms of tissue distribution, enriched in the pancreatic beta cell and the testis and is expressed at low levels in other tissues tested.

It localises to the cytoplasm. The protein resides in the cytosol. It is found in the mitochondrion outer membrane. Acts as an inhibitor of mitochondrial fission. Interacts with MFF and prevents DNM1L recruitment to mitochondria, promoting a more fused mitochondrial network. In Homo sapiens (Human), this protein is Protein MFI.